The primary structure comprises 425 residues: Type II secretion system protein L (425 aa).

Residues Met-1–Pro-273 lie on the Cytoplasmic side of the membrane. A helical membrane pass occupies residues Trp-274–Ala-290. Residues Asp-291–Gln-425 are Periplasmic-facing.

Belongs to the GSP L family. Type II secretion system is composed of four main components: the outer membrane complex, the inner membrane complex, the cytoplasmic secretion ATPase and the periplasm-spanning pseudopilus. Forms homodimers. Interacts with OutM/GspM. Interacts with OutE/GspE and OutF/GspF.

It localises to the cell inner membrane. Inner membrane component of the type II secretion system required for the energy-dependent secretion of extracellular factors such as proteases and toxins from the periplasm. Plays a role in the complex assembly and recruits OutM resulting in a stable complex in the inner membrane. Provides thus a link between the energy-providing OutE protein in the cytoplasm and the rest of the T2SS machinery. This is Type II secretion system protein L (outL) from Pectobacterium carotovorum subsp. carotovorum (Erwinia carotovora subsp. carotovora).